The sequence spans 468 residues: Adenosylhomocysteinase (468 aa).

Substrate is bound by residues Thr57, Asp132, and Glu194. 195-197 (TTT) provides a ligand contact to NAD(+). The substrate site is built by Lys224 and Asp228. Residues Asn229, 258–263 (GFGDVG), Glu281, Asn316, 337–339 (IGH), and Asn382 each bind NAD(+).

It belongs to the adenosylhomocysteinase family. NAD(+) is required as a cofactor.

It is found in the cytoplasm. The catalysed reaction is S-adenosyl-L-homocysteine + H2O = L-homocysteine + adenosine. Its pathway is amino-acid biosynthesis; L-homocysteine biosynthesis; L-homocysteine from S-adenosyl-L-homocysteine: step 1/1. Its function is as follows. May play a key role in the regulation of the intracellular concentration of adenosylhomocysteine. This chain is Adenosylhomocysteinase, found in Methylorubrum populi (strain ATCC BAA-705 / NCIMB 13946 / BJ001) (Methylobacterium populi).